Consider the following 395-residue polypeptide: Phosphoglycerate kinase (395 aa).

Substrate-binding positions include 21 to 23 (DLN), R36, 59 to 62 (HLGR), R113, and R146. ATP contacts are provided by residues K197, E324, and 350 to 353 (GGDT).

It belongs to the phosphoglycerate kinase family. In terms of assembly, monomer.

It localises to the cytoplasm. It carries out the reaction (2R)-3-phosphoglycerate + ATP = (2R)-3-phospho-glyceroyl phosphate + ADP. It functions in the pathway carbohydrate degradation; glycolysis; pyruvate from D-glyceraldehyde 3-phosphate: step 2/5. The sequence is that of Phosphoglycerate kinase from Acinetobacter baumannii (strain ATCC 17978 / DSM 105126 / CIP 53.77 / LMG 1025 / NCDC KC755 / 5377).